Reading from the N-terminus, the 189-residue chain is GTPase NRas (189 aa).

Residues 10–18 (GAGGVGKSA) and 29–30 (VD) each bind GTP. The Effector region signature appears at 32-40 (YDPTIEDSY). 57-61 (DTAGQ) is a GTP binding site. Serine 89 bears the Phosphoserine mark. 116–119 (NKCD) lines the GTP pocket. Residues 166 to 185 (YRMKKLNSSEDGTQGCMGLP) form a hypervariable region region. A Glycyl lysine isopeptide (Lys-Gly) (interchain with G-Cter in ubiquitin) cross-link involves residue lysine 170. Residue cysteine 181 is the site of S-palmitoyl cysteine attachment. Cysteine 186 carries the S-farnesyl cysteine lipid modification. Positions 187–189 (VVM) are cleaved as a propeptide — removed in mature form.

The protein belongs to the small GTPase superfamily. Ras family. Interacts (active GTP-bound form preferentially) with RGS14. Interacts (active GTP-bound form) with RASSF7. Interacts (active GTP-bound form) with both SHOC2 and PP1c (all isoforms) to form a tertiary complex; SHOC2 and PP1c preferably bind M-Ras/MRAS, but they also bind K-Ras/KRAS, N-Ras/NRAS and H-Ras/HRAS. Palmitoylated by the ZDHHC9-GOLGA7 complex. Depalmitoylated by ABHD17A, ABHD17B and ABHD17C. A continuous cycle of de- and re-palmitoylation regulates rapid exchange between plasma membrane and Golgi. In terms of processing, acetylation at Lys-104 prevents interaction with guanine nucleotide exchange factors (GEFs). Post-translationally, ubiquitinated by the BCR(LZTR1) E3 ubiquitin ligase complex at Lys-170 in a non-degradative manner, leading to inhibit Ras signaling by decreasing Ras association with membranes. Phosphorylation at Ser-89 enhances NRAS association with its downstream effectors.

It is found in the cell membrane. The protein resides in the golgi apparatus membrane. It carries out the reaction GTP + H2O = GDP + phosphate + H(+). With respect to regulation, alternates between an inactive form bound to GDP and an active form bound to GTP. Activated by a guanine nucleotide-exchange factor (GEF) and inactivated by a GTPase-activating protein (GAP). Ras proteins bind GDP/GTP and possess intrinsic GTPase activity. The protein is GTPase NRas (Nras) of Rattus norvegicus (Rat).